We begin with the raw amino-acid sequence, 537 residues long: Leucine-rich repeat LGI family member 4 (537 aa).

The N-terminal stretch at 1 to 19 (MGGAGILLLLLAGAGVVVA) is a signal peptide. 4 LRR repeats span residues 53–74 (TLLS…SFLR), 77–98 (SLHL…AFAG), 101–122 (HLQY…ALRG), and 125–146 (SLTH…LFRG). One can recognise an LRRCT domain in the interval 158–208 (NPFQCDCRVLWLLQWMPTVNASVGTGACAGPASLSHMQLHHLDPKTFKCRA). N-linked (GlcNAc...) asparagine glycosylation occurs at Asn177. EAR repeat units follow at residues 210-252 (ELSW…SWDY), 256-298 (RFRP…ARPS), 302-349 (RLAP…CRDG), 351-394 (GFYP…HWTG), 396-439 (RFER…RWDG), 441-483 (MFRL…RLEP), and 487-532 (LLEP…QHHE).

Can bind to ADAM11, ADAM22 and ADAM23. Widely expressed, with highest expression in brain.

It is found in the secreted. Its function is as follows. Component of Schwann cell signaling pathway(s) that controls axon segregation and myelin formation. The polypeptide is Leucine-rich repeat LGI family member 4 (LGI4) (Homo sapiens (Human)).